Reading from the N-terminus, the 126-residue chain is MAQIPPSLQDLVNRFNQAQAQLQSVLLRKQQYEAELKEVEKALAEIEKLPQDAKIYKSVGNFLIPQTKDAALQELKERKELLELHAKTLTRQESMLREQIDKLRDEINKELGKLRGGAQEAAKGGS.

Belongs to the prefoldin subunit beta family. In terms of assembly, heterohexamer of two alpha and four beta subunits.

Its subcellular location is the cytoplasm. Functionally, molecular chaperone capable of stabilizing a range of proteins. Seems to fulfill an ATP-independent, HSP70-like function in archaeal de novo protein folding. This is Prefoldin subunit beta from Pyrobaculum neutrophilum (strain DSM 2338 / JCM 9278 / NBRC 100436 / V24Sta) (Thermoproteus neutrophilus).